The primary structure comprises 252 residues: Beta-crystallin B1 (252 aa).

Composition is skewed to low complexity over residues 1-15 (MSQA…TVAV) and 24-37 (KGAP…SPGT). Residues 1-42 (MSQAAKASASATVAVNPGPDTKGKGAPPAGTSPSPGTTLAPT) are disordered. The residue at position 2 (serine 2) is an N-acetylserine. The segment at 2 to 58 (SQAAKASASATVAVNPGPDTKGKGAPPAGTSPSPGTTLAPTTVPITSAKAAELPPGN) is N-terminal arm. 2 consecutive Beta/gamma crystallin 'Greek key' domains span residues 59-98 (YRLV…IVSA) and 99-143 (GPWV…RPIK). The tract at residues 144-148 (MDAQE) is connecting peptide. 2 Beta/gamma crystallin 'Greek key' domains span residues 149 to 190 (HKIS…KVSS) and 191 to 233 (GTWV…RRLR). Positions 235–252 (KQWHLEGSFPVLATEPPK) are C-terminal arm.

The protein belongs to the beta/gamma-crystallin family. As to quaternary structure, homo/heterodimer, or complexes of higher-order. The structure of beta-crystallin oligomers seems to be stabilized through interactions between the N-terminal arms. Specific cleavages in the N-terminal arm occur during lens maturation and give rise to truncated forms, leading to impaired oligomerization and protein insolubilization.

In terms of biological role, crystallins are the dominant structural components of the vertebrate eye lens. The chain is Beta-crystallin B1 (CRYBB1) from Homo sapiens (Human).